Here is a 94-residue protein sequence, read N- to C-terminus: Small ribosomal subunit protein uS19 (94 aa).

The protein belongs to the universal ribosomal protein uS19 family.

In terms of biological role, protein S19 forms a complex with S13 that binds strongly to the 16S ribosomal RNA. This is Small ribosomal subunit protein uS19 from Acetivibrio thermocellus (strain ATCC 27405 / DSM 1237 / JCM 9322 / NBRC 103400 / NCIMB 10682 / NRRL B-4536 / VPI 7372) (Clostridium thermocellum).